Consider the following 326-residue polypeptide: Cytosolic Fe-S cluster assembly factor NBP35 (326 aa).

A disordered region spans residues 1–38; the sequence is MTEIANGQQILPPDYTLKEPEPEHCPGPESENAGKGDS. Positions 16–26 are enriched in basic and acidic residues; the sequence is TLKEPEPEHCP. 4 residues coordinate [4Fe-4S] cluster: C25, C39, C42, and C48. 78–85 serves as a coordination point for ATP; that stretch reads GKGGVGKS. Residues C251 and C254 each coordinate [4Fe-4S] cluster.

The protein belongs to the Mrp/NBP35 ATP-binding proteins family. NUBP1/NBP35 subfamily. Heterotetramer of 2 NBP35 and 2 CFD1 chains. Requires [4Fe-4S] cluster as cofactor.

It localises to the cytoplasm. The protein localises to the nucleus. Component of the cytosolic iron-sulfur (Fe/S) protein assembly (CIA) machinery. Required for maturation of extramitochondrial Fe-S proteins. The NBP35-CFD1 heterotetramer forms a Fe-S scaffold complex, mediating the de novo assembly of an Fe-S cluster and its transfer to target apoproteins. Required for biogenesis and export of both ribosomal subunits, which may reflect a role in assembly of the Fe/S clusters in RLI1, a protein which performs rRNA processing and ribosome export. The polypeptide is Cytosolic Fe-S cluster assembly factor NBP35 (Kluyveromyces lactis (strain ATCC 8585 / CBS 2359 / DSM 70799 / NBRC 1267 / NRRL Y-1140 / WM37) (Yeast)).